Consider the following 413-residue polypeptide: Serine hydroxymethyltransferase (413 aa).

Residues Leu-117 and 121-123 (GHL) each bind (6S)-5,6,7,8-tetrahydrofolate. Residue Lys-226 is modified to N6-(pyridoxal phosphate)lysine. (6S)-5,6,7,8-tetrahydrofolate is bound by residues Glu-239 and 349–351 (SPF).

It belongs to the SHMT family. Homodimer. It depends on pyridoxal 5'-phosphate as a cofactor.

It is found in the cytoplasm. It catalyses the reaction (6R)-5,10-methylene-5,6,7,8-tetrahydrofolate + glycine + H2O = (6S)-5,6,7,8-tetrahydrofolate + L-serine. Its pathway is one-carbon metabolism; tetrahydrofolate interconversion. It participates in amino-acid biosynthesis; glycine biosynthesis; glycine from L-serine: step 1/1. Its function is as follows. Catalyzes the reversible interconversion of serine and glycine with tetrahydrofolate (THF) serving as the one-carbon carrier. This reaction serves as the major source of one-carbon groups required for the biosynthesis of purines, thymidylate, methionine, and other important biomolecules. Also exhibits THF-independent aldolase activity toward beta-hydroxyamino acids, producing glycine and aldehydes, via a retro-aldol mechanism. In Bacillus mycoides (strain KBAB4) (Bacillus weihenstephanensis), this protein is Serine hydroxymethyltransferase.